A 269-amino-acid polypeptide reads, in one-letter code: 3'(2'),5'-bisphosphate nucleotidase CysQ (269 aa).

Positions 69, 89, 91, 92, and 216 each coordinate Mg(2+). Glu-69 is a binding site for substrate. Substrate-binding positions include 91–94 (LDGT) and Asp-216.

Belongs to the inositol monophosphatase superfamily. CysQ family. Mg(2+) is required as a cofactor.

The protein localises to the cell inner membrane. The enzyme catalyses adenosine 3',5'-bisphosphate + H2O = AMP + phosphate. In terms of biological role, converts adenosine-3',5'-bisphosphate (PAP) to AMP. This chain is 3'(2'),5'-bisphosphate nucleotidase CysQ, found in Aggregatibacter actinomycetemcomitans (Actinobacillus actinomycetemcomitans).